Consider the following 897-residue polypeptide: Leucine--tRNA ligase (897 aa).

The 'HIGH' region motif lies at 42–52 (PYPSGKLHMGH). The short motif at 645–649 (TMSKS) is the 'KMSKS' region element. K648 contacts ATP.

It belongs to the class-I aminoacyl-tRNA synthetase family.

It localises to the cytoplasm. It carries out the reaction tRNA(Leu) + L-leucine + ATP = L-leucyl-tRNA(Leu) + AMP + diphosphate. This chain is Leucine--tRNA ligase, found in Paracidovorax citrulli (strain AAC00-1) (Acidovorax citrulli).